The following is a 283-amino-acid chain: Putative pyruvate, phosphate dikinase regulatory protein (283 aa).

154-161 (GVSRTSKT) is a binding site for ADP.

The protein belongs to the pyruvate, phosphate/water dikinase regulatory protein family. PDRP subfamily.

It carries out the reaction N(tele)-phospho-L-histidyl/L-threonyl-[pyruvate, phosphate dikinase] + ADP = N(tele)-phospho-L-histidyl/O-phospho-L-threonyl-[pyruvate, phosphate dikinase] + AMP + H(+). It catalyses the reaction N(tele)-phospho-L-histidyl/O-phospho-L-threonyl-[pyruvate, phosphate dikinase] + phosphate + H(+) = N(tele)-phospho-L-histidyl/L-threonyl-[pyruvate, phosphate dikinase] + diphosphate. Bifunctional serine/threonine kinase and phosphorylase involved in the regulation of the pyruvate, phosphate dikinase (PPDK) by catalyzing its phosphorylation/dephosphorylation. This Afipia carboxidovorans (strain ATCC 49405 / DSM 1227 / KCTC 32145 / OM5) (Oligotropha carboxidovorans) protein is Putative pyruvate, phosphate dikinase regulatory protein.